We begin with the raw amino-acid sequence, 425 residues long: Pectate lyase L (425 aa).

The N-terminal stretch at 1 to 25 is a signal peptide; the sequence is MKYLNCFISTGLAAFFLVNSTSVLA. An intrachain disulfide couples C28 to C114. Residues D209, D233, D234, and D237 each contribute to the Ca(2+) site. The active-site Proton acceptor is the K273. Positions 402, 413, 416, 418, and 423 each coordinate Ca(2+).

The protein belongs to the polysaccharide lyase 9 family. The cofactor is Ca(2+).

The protein resides in the secreted. It catalyses the reaction Eliminative cleavage of (1-&gt;4)-alpha-D-galacturonan to give oligosaccharides with 4-deoxy-alpha-D-galact-4-enuronosyl groups at their non-reducing ends.. Its pathway is glycan metabolism; pectin degradation; 2-dehydro-3-deoxy-D-gluconate from pectin: step 2/5. Its function is as follows. Presents an endo-cleaving activity on polygalacturonate or partially methylated pectin. Is effective in the maceration of plant tissue, and has an important role in soft-rot disease. Is 280-fold less active against polygalacturonate than the major pectate lyase PelB. When assayed on polygalacturonate, PelL releases oligogalacturonates of different sizes; upon prolonged incubation, PelL degrades the primary products to unsaturated tetramer and pentamer in addition to unsaturated dimer and trimer. When assayed on oligogalacturonates (degrees of polymerization of 2 to 8), it preferentially forms unsaturated tetramer, and displays the highest activity on the octamer. The chain is Pectate lyase L (pelL) from Dickeya dadantii (strain 3937) (Erwinia chrysanthemi (strain 3937)).